The primary structure comprises 944 residues: Breast cancer type 2 susceptibility protein homolog (944 aa).

2 stretches are compositionally biased toward basic and acidic residues: residues 325–348 (KKVK…ESKI) and 415–431 (NSIK…ETPN). Disordered stretches follow at residues 325–354 (KKVK…ASCD) and 415–440 (NSIK…SSHQ). BRCA2 repeat units follow at residues 543–577 (AEPE…EFQS), 644–678 (NESQ…QSRA), and 719–753 (SETE…EFQA). 2 disordered regions span residues 823–854 (LCSQ…LDQA) and 876–944 (SSTE…RSRY). 2 stretches are compositionally biased toward polar residues: residues 838 to 852 (IHSS…SPLD) and 876 to 885 (SSTETSTSCA). The span at 904–921 (ADRDLNRSKDCAKNRQDA) shows a compositional bias: basic and acidic residues. Positions 932 to 944 (KKSRRLGLSRSRY) are enriched in basic residues.

Interacts with Rad9 and spn-A/Rad51.

It localises to the nucleus. Its function is as follows. Involved in and required for double-strand break repair by meiotic and mitotic homologous recombination. During meiosis, has a dual role in the repair of meiotic double-stranded breaks and the efficient activation of the meiotic recombination checkpoint. This chain is Breast cancer type 2 susceptibility protein homolog, found in Drosophila simulans (Fruit fly).